The following is a 431-amino-acid chain: 5-methylthioadenosine/S-adenosylhomocysteine deaminase (431 aa).

Zn(2+)-binding residues include His66 and His68. Residues Glu95, Arg147, and His185 each contribute to the substrate site. Residue His212 coordinates Zn(2+). Positions 215 and 300 each coordinate substrate. Asp300 serves as a coordination point for Zn(2+).

This sequence belongs to the metallo-dependent hydrolases superfamily. MTA/SAH deaminase family. It depends on Zn(2+) as a cofactor.

The catalysed reaction is S-adenosyl-L-homocysteine + H2O + H(+) = S-inosyl-L-homocysteine + NH4(+). It carries out the reaction S-methyl-5'-thioadenosine + H2O + H(+) = S-methyl-5'-thioinosine + NH4(+). In terms of biological role, catalyzes the deamination of 5-methylthioadenosine and S-adenosyl-L-homocysteine into 5-methylthioinosine and S-inosyl-L-homocysteine, respectively. Is also able to deaminate adenosine. This chain is 5-methylthioadenosine/S-adenosylhomocysteine deaminase, found in Desulfitobacterium hafniense (strain Y51).